The chain runs to 485 residues: NADH-quinone oxidoreductase subunit N (485 aa).

14 helical membrane-spanning segments follow: residues Leu-8–Ile-28, Phe-35–Val-55, Gly-78–Tyr-98, Glu-104–His-124, Leu-125–Tyr-145, Tyr-159–Ala-179, Val-203–Phe-223, Pro-235–Met-255, Met-271–Gln-291, Leu-297–Gln-317, Gly-327–Met-347, Ala-374–Gly-394, Trp-408–Arg-427, and Ala-449–Val-469.

The protein belongs to the complex I subunit 2 family. As to quaternary structure, NDH-1 is composed of 13 different subunits. Subunits NuoA, H, J, K, L, M, N constitute the membrane sector of the complex.

The protein resides in the cell inner membrane. The enzyme catalyses a quinone + NADH + 5 H(+)(in) = a quinol + NAD(+) + 4 H(+)(out). Functionally, NDH-1 shuttles electrons from NADH, via FMN and iron-sulfur (Fe-S) centers, to quinones in the respiratory chain. The immediate electron acceptor for the enzyme in this species is believed to be ubiquinone. Couples the redox reaction to proton translocation (for every two electrons transferred, four hydrogen ions are translocated across the cytoplasmic membrane), and thus conserves the redox energy in a proton gradient. This Serratia proteamaculans (strain 568) protein is NADH-quinone oxidoreductase subunit N.